The sequence spans 709 residues: MAETLEFNDVYQEVKGSMNDGRLRLSRQGIIFKNSKTGKVDNIQAGELTEGIWRRVALGHGLKLLTKNGHVYKYDGFRESEFEKLSDFFKTHYRLELMEKDLCVKGWNWGTVKFGGQLLSFDIGDQPVFEIPLSNVSQCTTGKNEVTLEFHQNDDAEVSLMEVRFYVPPTQEDGVDPVEAFAQNVLSKADVIQATGDAICIFRELQCLTPRGRYDIRIYPTFLHLHGKTFDYKIPYTTVLRLFLLPHKDQRQMFFVISLDPPIKQGQTRYHFLILLFSKDEDISLTLNMNEEEVEKRFEGRLTKNMSGSLYEMVSRVMKALVNRKITVPGNFQGHSGAQCITCSYKASSGLLYPLERGFIYVHKPPVHIRFDEISFVNFARGTTTTRSFDFEIETKQGTQYTFSSIEREEYGKLFDFVNAKKLNIKNRGLKEGMNPSYDEYADSDEDQHDAYLERMKEEGKIREENANDSSDDSGEETDESFNPGEEEEDVAEEFDSNASASSSSNEGDSDRDEKKRKQLKKAKMAKDRKSRKKPVEVKKGKDPNAPKRPMSAYMLWLNASREKIKSDHPGISITDLSKKAGEIWKGMSKEKKEEWDRKAEDARRDYEKAMKEYEGGRGESSKRDKSKKKKKVKVKMEKKSTPSRGSSSKSSSRQLSESFKSKEFVSSDESSSGENKSKKKRRRSEDSEEEELASTPPSSEDSASGSDE.

At Ala2 the chain carries N-acetylalanine. Lys90 participates in a covalent cross-link: Glycyl lysine isopeptide (Lys-Gly) (interchain with G-Cter in SUMO2). Thr170 bears the Phosphothreonine mark. An N6-acetyllysine modification is found at Lys233. Residues Lys296 and Lys364 each participate in a glycyl lysine isopeptide (Lys-Gly) (interchain with G-Cter in SUMO2) cross-link. N6-acetyllysine is present on Lys413. The residue at position 437 (Ser437) is a Phosphoserine. Tyr441 is subject to Phosphotyrosine. Position 444 is a phosphoserine (Ser444). Tyr452 is subject to Phosphotyrosine. The interval 458–709 (EEGKIREENA…SEDSASGSDE (252 aa)) is disordered. The segment covering 470-496 (SSDDSGEETDESFNPGEEEEDVAEEFD) has biased composition (acidic residues). The residue at position 471 (Ser471) is a Phosphoserine. Residues 497–507 (SNASASSSSNE) show a composition bias toward low complexity. Ser510 carries the post-translational modification Phosphoserine; by CK2. Residues 515 to 533 (KKRKQLKKAKMAKDRKSRK) show a composition bias toward basic residues. 2 stretches are compositionally biased toward basic and acidic residues: residues 534-546 (KPVE…DPNA) and 577-624 (LSKK…SSKR). Residue Lys542 is modified to N6-acetyllysine. The segment at residues 547–615 (PKRPMSAYML…DYEKAMKEYE (69 aa)) is a DNA-binding region (HMG box). Residues 625-634 (DKSKKKKKVK) show a composition bias toward basic residues. Over residues 643–659 (PSRGSSSKSSSRQLSES) the composition is skewed to low complexity. Phosphoserine is present on residues Ser657, Ser659, Ser667, Ser668, Ser671, Ser672, and Ser673. Ser688 carries the post-translational modification Phosphoserine; by CK2. Residues 696–709 (TPPSSEDSASGSDE) show a composition bias toward polar residues.

This sequence belongs to the SSRP1 family. As to quaternary structure, interacts with MYOG (via C-terminal region). Component of the FACT complex, a stable heterodimer of SSRP1 and SUPT16H. Also a component of a CK2-SPT16-SSRP1 complex which forms following UV irradiation, composed of SSRP1, SUPT16H, CSNK2A1, CSNK2A2 and CSNK2B. Binds to histone H3-H4 tetramers, but not to intact nucleosomes. Identified in a centromere complex containing histones H2A, H2B and H4, and at least CENPA, CENPB, CENPC, CENPT, CENPN, HJURP, SUPT16H, SSRP1 and RSF1. Interacts with isoform gamma of TP63. Interacts with FYTTD1/UIF. Interacts with SRF. Interacts with NEK9. In terms of assembly, (Microbial infection) Interacts with Herpes simplex virus 1 (HHV-1) protein ICP22; this interaction relocalizes the FACT complex to viral genomes in infected cells. Phosphorylated by CK2 following UV but not gamma irradiation. Phosphorylation inhibits its DNA-binding activity. Post-translationally, ubiquitinated. Polyubiquitinated following caspase cleavage resulting in degradation of the N-terminal ubiquitinated part of the cleaved protein. In terms of processing, sumoylated.

Its subcellular location is the nucleus. It is found in the nucleolus. The protein localises to the chromosome. Functionally, component of the FACT complex, a general chromatin factor that acts to reorganize nucleosomes. The FACT complex is involved in multiple processes that require DNA as a template such as mRNA elongation, DNA replication and DNA repair. During transcription elongation the FACT complex acts as a histone chaperone that both destabilizes and restores nucleosomal structure. It facilitates the passage of RNA polymerase II and transcription by promoting the dissociation of one histone H2A-H2B dimer from the nucleosome, then subsequently promotes the reestablishment of the nucleosome following the passage of RNA polymerase II. The FACT complex is probably also involved in phosphorylation of 'Ser-392' of p53/TP53 via its association with CK2 (casein kinase II). Binds specifically to double-stranded DNA and at low levels to DNA modified by the antitumor agent cisplatin. May potentiate cisplatin-induced cell death by blocking replication and repair of modified DNA. Also acts as a transcriptional coactivator for p63/TP63. The polypeptide is FACT complex subunit SSRP1 (SSRP1) (Homo sapiens (Human)).